Reading from the N-terminus, the 147-residue chain is Hemoglobin subunit beta (147 aa).

Residues 3 to 147 form the Globin domain; it reads EWTDDERAII…VVSALGRQYH (145 aa). Residues His64 and His93 each contribute to the heme b site.

Belongs to the globin family. As to quaternary structure, heterotetramer of two alpha chains and two beta chains. As to expression, red blood cells.

Involved in oxygen transport from gills to the various peripheral tissues. The sequence is that of Hemoglobin subunit beta (hbb) from Melanogrammus aeglefinus (Haddock).